The sequence spans 132 residues: Ribosome-binding factor A (132 aa).

Belongs to the RbfA family. Monomer. Binds 30S ribosomal subunits, but not 50S ribosomal subunits or 70S ribosomes.

It localises to the cytoplasm. In terms of biological role, one of several proteins that assist in the late maturation steps of the functional core of the 30S ribosomal subunit. Associates with free 30S ribosomal subunits (but not with 30S subunits that are part of 70S ribosomes or polysomes). Required for efficient processing of 16S rRNA. May interact with the 5'-terminal helix region of 16S rRNA. This is Ribosome-binding factor A from Prochlorococcus marinus (strain MIT 9515).